A 188-amino-acid polypeptide reads, in one-letter code: ATP synthase subunit delta (188 aa).

This sequence belongs to the ATPase delta chain family. F-type ATPases have 2 components, F(1) - the catalytic core - and F(0) - the membrane proton channel. F(1) has five subunits: alpha(3), beta(3), gamma(1), delta(1), epsilon(1). F(0) has three main subunits: a(1), b(2) and c(10-14). The alpha and beta chains form an alternating ring which encloses part of the gamma chain. F(1) is attached to F(0) by a central stalk formed by the gamma and epsilon chains, while a peripheral stalk is formed by the delta and b chains.

It is found in the cell inner membrane. Functionally, f(1)F(0) ATP synthase produces ATP from ADP in the presence of a proton or sodium gradient. F-type ATPases consist of two structural domains, F(1) containing the extramembraneous catalytic core and F(0) containing the membrane proton channel, linked together by a central stalk and a peripheral stalk. During catalysis, ATP synthesis in the catalytic domain of F(1) is coupled via a rotary mechanism of the central stalk subunits to proton translocation. This protein is part of the stalk that links CF(0) to CF(1). It either transmits conformational changes from CF(0) to CF(1) or is implicated in proton conduction. The protein is ATP synthase subunit delta of Rhizobium leguminosarum bv. trifolii (strain WSM2304).